The sequence spans 293 residues: Germ cell-specific gene 1-like protein 2 (293 aa).

At 1–8 (MDRAKQQQ) the chain is on the cytoplasmic side. A helical transmembrane segment spans residues 9-29 (ALLLLPVCLALTFSLTAVVSS). The Extracellular segment spans residues 30 to 120 (HWCEGTRRVV…RSVVPAEEQG (91 aa)). N-linked (GlcNAc...) asparagine glycosylation is found at asparagine 59 and asparagine 67. The helical transmembrane segment at 121–141 (VLWLSIGGEVLDIVLILTSAI) threads the bilayer. Over 142–160 (LLGSRVSCRSPGFHWLRVD) the chain is Cytoplasmic. A helical transmembrane segment spans residues 161–181 (ALVAIFMVLAGLLGMVAHMMY). Residues 182–204 (TTIFQITVNLGPEDWKPQTWDYG) lie on the Extracellular side of the membrane. The chain crosses the membrane as a helical span at residues 205–225 (WSYCLAWGSFALCLAVSVSAM). The Cytoplasmic portion of the chain corresponds to 226 to 293 (SRFTAARLEF…PGAPGKVSIC (68 aa)).

This sequence belongs to the GSG1 family.

It is found in the membrane. This Homo sapiens (Human) protein is Germ cell-specific gene 1-like protein 2.